The chain runs to 279 residues: Large ribosomal subunit protein uL2 (279 aa).

The segment at 224-279 (AMNPIDHPHGGGEGRTSGGRHPVTPWGKGTKGNRTRKSKASDKLIVRSRHAKKKGR) is disordered. Basic residues predominate over residues 269–279 (VRSRHAKKKGR).

Belongs to the universal ribosomal protein uL2 family. As to quaternary structure, part of the 50S ribosomal subunit. Forms a bridge to the 30S subunit in the 70S ribosome.

Functionally, one of the primary rRNA binding proteins. Required for association of the 30S and 50S subunits to form the 70S ribosome, for tRNA binding and peptide bond formation. It has been suggested to have peptidyltransferase activity; this is somewhat controversial. Makes several contacts with the 16S rRNA in the 70S ribosome. This Cereibacter sphaeroides (strain ATCC 17029 / ATH 2.4.9) (Rhodobacter sphaeroides) protein is Large ribosomal subunit protein uL2.